The following is a 666-amino-acid chain: MEQEPQNGEPAEIKIIREAYKKAFLFVNKGLNTDELGQKEEAKNYYKQGIGHLLRGISISSKESEHTGPGWESARQMQQKMKETLQNVRTRLEILEKGLATSLQNDLQEVPKLYPEFPPKDMCEKLPEPQSFSSAPQHAEVNGNTSTPSAGAVAAPASLSLPSQSCPAEAPPAYTPQAAEGHYTVSYGTDSGEFSSVGEEFYRNHSQPPPLETLGLDADELILIPNGVQIFFVNPAGEVSAPSYPGYLRIVRFLDNSLDTVLNRPPGFLQVCDWLYPLVPDRSPVLKCTAGAYMFPDTMLQAAGCFVGVVLSSELPEDDRELFEDLLRQMSDLRLQANWNRAEEENEFQIPGRTRPSSDQLKEASGTDVKQLDQGNKDVRHKGKRGKRAKDTSSEEVNLSHIVPCEPVPEEKPKELPEWSEKVAHNILSGASWVSWGLVKGAEITGKAIQKGASKLRERIQPEEKPVEVSPAVTKGLYIAKQATGGAAKVSQFLVDGVCTVANCVGKELAPHVKKHGSKLVPESLKKDKDGKSPLDGAMVVAASSVQGFSTVWQGLECAAKCIVNNVSAETVQTVRYKYGYNAGEATHHAVDSAVNVGVTAYNINNIGIKAMVKKTATQTGHTLLEDYQIVDNSQRENQEGAANVNVRGEKDEQTKEVKEAKKKDK.

At Met1 the chain carries N-acetylmethionine. The 79-residue stretch at 16–94 folds into the MIT domain; sequence IREAYKKAFL…LQNVRTRLEI (79 aa). A disordered region spans residues 124–156; sequence EKLPEPQSFSSAPQHAEVNGNTSTPSAGAVAAP. Low complexity predominate over residues 146-156; that stretch reads STPSAGAVAAP. A ubiquitin-binding region (UBR) domain region spans residues 190–380; sequence DSGEFSSVGE…QLDQGNKDVR (191 aa). Residues 193-200 carry the LC3-interacting region (LIR); mediates interaction with MAP1LC3A AND MAP1LC3C motif; that stretch reads EFSSVGEE. Residues 344-398 form a disordered region; the sequence is EENEFQIPGRTRPSSDQLKEASGTDVKQLDQGNKDVRHKGKRGKRAKDTSSEEVN. A Glycyl lysine isopeptide (Lys-Gly) (interchain with G-Cter in ubiquitin) cross-link involves residue Lys362. The span at 379 to 388 shows a compositional bias: basic residues; it reads VRHKGKRGKR. Positions 427 to 611 constitute a Senescence domain; the sequence is ILSGASWVSW…YNINNIGIKA (185 aa). The required for localization to lipid droplets stretch occupies residues 431 to 503; the sequence is ASWVSWGLVK…LVDGVCTVAN (73 aa). Ser470 bears the Phosphoserine mark. Residues 636–666 are disordered; that stretch reads RENQEGAANVNVRGEKDEQTKEVKEAKKKDK. Positions 648 to 666 are enriched in basic and acidic residues; the sequence is RGEKDEQTKEVKEAKKKDK.

In terms of assembly, interacts with ITCH and WWP1. Interacts (via MIT domain) with IST1; leading to the recruitment of SPART to midbodies. Interacts with MAP1LC3A and MAP1LC3C. Post-translationally, ubiquitinated; ubiquitination does not require ITCH and WWP1. In terms of tissue distribution, ubiquitously expressed, with highest levels of expression detected in adipose tissue.

Its subcellular location is the cytoplasm. It localises to the midbody. It is found in the lipid droplet. In terms of biological role, lipophagy receptor that plays an important role in lipid droplet (LD) turnover in motor neurons. Localizes to LDs and interacts with components of the autophagy machinery, such as MAP1LC3A/C proteins to deliver LDs to autophagosomes for degradation via lipophagy. Lipid transfer protein required for lipid droplet degradation, including by lipophagy. Can bind and transfer all lipid species found in lipid droplets, from phospholipids to triglycerides and sterol esters but the direction of lipid transfer by spartin and its cargos are unknown. May be implicated in endosomal trafficking, or microtubule dynamics, or both. Participates in cytokinesis. The chain is Spartin from Homo sapiens (Human).